The primary structure comprises 101 residues: Urease subunit beta (101 aa).

The protein belongs to the urease beta subunit family. In terms of assembly, heterotrimer of UreA (gamma), UreB (beta) and UreC (alpha) subunits. Three heterotrimers associate to form the active enzyme.

It is found in the cytoplasm. It carries out the reaction urea + 2 H2O + H(+) = hydrogencarbonate + 2 NH4(+). It participates in nitrogen metabolism; urea degradation; CO(2) and NH(3) from urea (urease route): step 1/1. The chain is Urease subunit beta from Paraburkholderia phytofirmans (strain DSM 17436 / LMG 22146 / PsJN) (Burkholderia phytofirmans).